The chain runs to 96 residues: Large ribosomal subunit protein uL23 (96 aa).

Belongs to the universal ribosomal protein uL23 family. Part of the 50S ribosomal subunit. Contacts protein L29, and trigger factor when it is bound to the ribosome.

One of the early assembly proteins it binds 23S rRNA. One of the proteins that surrounds the polypeptide exit tunnel on the outside of the ribosome. Forms the main docking site for trigger factor binding to the ribosome. The protein is Large ribosomal subunit protein uL23 of Ruthia magnifica subsp. Calyptogena magnifica.